Reading from the N-terminus, the 180-residue chain is MIIYLHGFDSNSPGNHEKVLQLQFIDPDVRLVSYSTRHPKHDMQHLLKEVDKMLQLNVDERPLICGVGLGGYWAERIGFLCDIRQVVFNPNLFPYENMEGKIDRPEEYADIATKCVTNFREKNRDRCLVILSRHDEALDSQRSAQALHPFYEIVWDEEQTHKFKNISPHLQRIKAFKTLG.

The protein belongs to the UPF0227 family.

The sequence is that of UPF0227 protein YcfP from Salmonella agona (strain SL483).